A 205-amino-acid chain; its full sequence is Type-4 uracil-DNA glycosylase (205 aa).

[4Fe-4S] cluster-binding residues include C13 and C16. Residues 40–42 (GEG), F54, and N80 each bind uracil. Positions 84 and 100 each coordinate [4Fe-4S] cluster. Uracil is bound at residue H155.

It belongs to the uracil-DNA glycosylase (UDG) superfamily. Type 4 (UDGa) family. As to quaternary structure, monomer.

The enzyme catalyses Hydrolyzes single-stranded DNA or mismatched double-stranded DNA and polynucleotides, releasing free uracil.. Its activity is regulated as follows. Product-inhibited by apurinic/apyrimidinic sites. Its function is as follows. Removes uracil bases that are present in DNA as a result of either deamination of cytosine or misincorporation of dUMP instead of dTMP. Can remove uracil from double-stranded DNA containing either a U/G, U/A, U/C or U/T base pair as well as from single-stranded DNA. Specifically recognizes uracil that is flipped out from double-stranded DNA. This Thermus thermophilus (strain ATCC 27634 / DSM 579 / HB8) protein is Type-4 uracil-DNA glycosylase.